A 197-amino-acid chain; its full sequence is Probable GTP-binding protein EngB (197 aa).

Residues 22 to 195 (GYPEIALVGR…WNWIEAQAFG (174 aa)) enclose the EngB-type G domain. GTP-binding positions include 30 to 37 (GRSNVGKS), 57 to 61 (GKTQT), 75 to 78 (DVPG), 142 to 145 (TKSD), and 174 to 176 (FSA). Residues Ser37 and Thr59 each coordinate Mg(2+).

The protein belongs to the TRAFAC class TrmE-Era-EngA-EngB-Septin-like GTPase superfamily. EngB GTPase family. Requires Mg(2+) as cofactor.

Necessary for normal cell division and for the maintenance of normal septation. In Levilactobacillus brevis (strain ATCC 367 / BCRC 12310 / CIP 105137 / JCM 1170 / LMG 11437 / NCIMB 947 / NCTC 947) (Lactobacillus brevis), this protein is Probable GTP-binding protein EngB.